Reading from the N-terminus, the 126-residue chain is Aspartate 1-decarboxylase (126 aa).

Ser25 serves as the catalytic Schiff-base intermediate with substrate; via pyruvic acid. At Ser25 the chain carries Pyruvic acid (Ser). Residue Thr57 participates in substrate binding. Tyr58 functions as the Proton donor in the catalytic mechanism. Residue 73–75 (GAA) participates in substrate binding.

Belongs to the PanD family. In terms of assembly, heterooctamer of four alpha and four beta subunits. It depends on pyruvate as a cofactor. In terms of processing, is synthesized initially as an inactive proenzyme, which is activated by self-cleavage at a specific serine bond to produce a beta-subunit with a hydroxyl group at its C-terminus and an alpha-subunit with a pyruvoyl group at its N-terminus.

It localises to the cytoplasm. The catalysed reaction is L-aspartate + H(+) = beta-alanine + CO2. It participates in cofactor biosynthesis; (R)-pantothenate biosynthesis; beta-alanine from L-aspartate: step 1/1. Functionally, catalyzes the pyruvoyl-dependent decarboxylation of aspartate to produce beta-alanine. This is Aspartate 1-decarboxylase from Serratia proteamaculans (strain 568).